Reading from the N-terminus, the 562-residue chain is Cytosolic Fe-S cluster assembly factor nar1 (562 aa).

Residue Cys20 coordinates [4Fe-4S] cluster. The tract at residues 28–47 is disordered; it reads PKNESSNSQNPYEVTTEDKV. Residues 29 to 40 show a composition bias toward polar residues; that stretch reads KNESSNSQNPYE. Residues Cys62, Cys65, Cys68, Cys214, and Cys269 each coordinate [4Fe-4S] cluster. Positions 439–462 are disordered; sequence ARVPAASAGGNRRQPISRNSASAG. The span at 452–462 shows a compositional bias: polar residues; sequence QPISRNSASAG. 2 residues coordinate [4Fe-4S] cluster: Cys475 and Cys479. Disordered stretches follow at residues 492-513 and 541-562; these read REAS…PTPH and HSPS…IGLT. Residues 494-505 show a composition bias toward polar residues; the sequence is ASTSTQSVTAVE.

This sequence belongs to the NARF family.

Its function is as follows. Component of the cytosolic Fe/S protein assembly machinery. Required for maturation of extramitochondrial Fe/S proteins. May play a role in the transfer of pre-assembled Fe/S clusters to target apoproteins. The polypeptide is Cytosolic Fe-S cluster assembly factor nar1 (nar1) (Aspergillus flavus (strain ATCC 200026 / FGSC A1120 / IAM 13836 / NRRL 3357 / JCM 12722 / SRRC 167)).